An 834-amino-acid polypeptide reads, in one-letter code: Protein SEY1 (834 aa).

Residues 1 to 26 (MSNVPSPTVTLEGDSPDAAHEAVSSS) form a disordered region. At 1–733 (MSNVPSPTVT…KRSIMQHVTQ (733 aa)) the chain is on the cytoplasmic side. A GB1/RHD3-type G domain is found at 63–296 (PGDYRIISVF…SESFLFKPNY (234 aa)). 73–80 (GSQSTGKS) provides a ligand contact to GTP. A coiled-coil region spans residues 659-688 (VRDKKLKRQYETVREEKEAEEEDEDEWDSE). The segment at 670–689 (TVREEKEAEEEDEDEWDSED) is disordered. The segment covering 676 to 689 (EAEEEDEDEWDSED) has biased composition (acidic residues). Residues 734–754 (IPYYIYIVILVLGWNEFMAIL) form a helical membrane-spanning segment. At 755-757 (RNP) the chain is on the lumenal side. The helical transmembrane segment at 758 to 778 (FFFTLLIMLAGATYVMYSMNL) threads the bilayer. The Cytoplasmic segment spans residues 779–834 (LGPASIVVQRMANEALGLAKEKLREFVVDDHMQHGHNMKKMTTNDIELDDLSEEST).

It belongs to the TRAFAC class dynamin-like GTPase superfamily. GB1/RHD3 GTPase family. RHD3 subfamily.

It localises to the endoplasmic reticulum membrane. In terms of biological role, cooperates with the reticulon proteins and tubule-shaping DP1 family proteins to generate and maintain the structure of the tubular endoplasmic reticulum network. Has GTPase activity, which is required for its function in ER organization. This is Protein SEY1 from Clavispora lusitaniae (strain ATCC 42720) (Yeast).